We begin with the raw amino-acid sequence, 613 residues long: Ribosome-associated molecular chaperone SSB1 (613 aa).

An N-acetylalanine modification is found at A2. Residues 2–391 (AEGVFQGAIG…ILTGQSTSDE (390 aa)) are nucleotide binding domain (NBD). An ATP-binding site is contributed by 16–18 (TTY). The residue at position 47 (T47) is a Phosphothreonine. Residues K73, 205–207 (GGT), 271–278 (ERAKRTLS), and G342 each bind ATP. The interval 392–402 (TKDLLLLDVAP) is inter-domain linker. Positions 403–613 (LSLGVGMQGD…RVVTKAMSSR (211 aa)) are substrate binding domain (SBD). The Contributes to ribosome binding motif lies at 428-430 (KRR). A Phosphothreonine modification is found at T431. Residues 516–612 (SEEIEKMVNQ…KRVVTKAMSS (97 aa)) form a lid domain (SBDalpha) region. Positions 574–582 (IEAALSDAL) match the Nuclear export signal motif. The tract at residues 601–613 (GLKRVVTKAMSSR) is required for interaction with ribosomes.

It belongs to the heat shock protein 70 family. Ssb-type Hsp70 subfamily. Binds to ribosomes. Binds close to the ribosomal tunnel exit via contacts with both ribosomal proteins RPL35, RPL39 and RPL19, and rRNA. Directly interacts with nascent polypeptides. This interaction is dependent on the ribosome-associated complex (RAC). Interacts with SSE1. Interacts with FES1. Interacts with NAP1.

It localises to the cytoplasm. The enzyme catalyses ATP + H2O = ADP + phosphate + H(+). Functionally, ribosome-bound, Hsp70-type chaperone that assists in the cotranslational folding of newly synthesized proteins in the cytosol. Stimulates folding by interacting with nascent chains, binding to short, largely hydrophobic sequences exposed by unfolded proteins, thereby stabilizing longer, more slowly translated, and aggregation-prone nascent polypeptides and domains that cannot fold stably until fully synthesized. The Hsp70-protein substrate interaction depends on ATP-binding and on allosteric regulation between the NBD and the SBD. The ATP-bound state is characterized by a fast exchange rate of substrate (low affinity state), while in the ADP-bound state exchange is much slower (high affinity state). During the Hsp70 cycle, the chaperone switches between the ATP-bound state (open conformation) and the ADP-bound state (closed conformation) by major conformational rearrangements involving mainly the lid domain. Ssb cooperates with a specific Hsp40/Hsp70 co-chaperone termed the ribosome-associated complex (RAC), which stimulates the ATPase activity of the ribosome-associated pool of Ssbs and switches it to the high affinity substrate binding state. Hsp110 chaperone SSE1 and FES1 act as nucleotide exchange factors that cause substrate release. The polypeptide is Ribosome-associated molecular chaperone SSB1 (Saccharomyces cerevisiae (strain ATCC 204508 / S288c) (Baker's yeast)).